We begin with the raw amino-acid sequence, 116 residues long: Urease subunit beta (116 aa).

A disordered region spans residues 97 to 116 (IQGPLDAGTAETAPGLPQQP).

Belongs to the urease beta subunit family. In terms of assembly, heterotrimer of UreA (gamma), UreB (beta) and UreC (alpha) subunits. Three heterotrimers associate to form the active enzyme.

The protein localises to the cytoplasm. The catalysed reaction is urea + 2 H2O + H(+) = hydrogencarbonate + 2 NH4(+). Its pathway is nitrogen metabolism; urea degradation; CO(2) and NH(3) from urea (urease route): step 1/1. The polypeptide is Urease subunit beta (Paracidovorax citrulli (strain AAC00-1) (Acidovorax citrulli)).